We begin with the raw amino-acid sequence, 174 residues long: NADH-quinone oxidoreductase subunit C (174 aa).

This sequence belongs to the complex I 30 kDa subunit family. In terms of assembly, NDH-1 is composed of 14 different subunits. Subunits NuoB, C, D, E, F, and G constitute the peripheral sector of the complex.

It localises to the cell membrane. It catalyses the reaction a quinone + NADH + 5 H(+)(in) = a quinol + NAD(+) + 4 H(+)(out). Functionally, NDH-1 shuttles electrons from NADH, via FMN and iron-sulfur (Fe-S) centers, to quinones in the respiratory chain. The immediate electron acceptor for the enzyme in this species is believed to be ubiquinone. Couples the redox reaction to proton translocation (for every two electrons transferred, four hydrogen ions are translocated across the cytoplasmic membrane), and thus conserves the redox energy in a proton gradient. The protein is NADH-quinone oxidoreductase subunit C of Roseiflexus castenholzii (strain DSM 13941 / HLO8).